The sequence spans 251 residues: POU class 2 homeobox associating factor 3 (251 aa).

Residues 5–27 enclose the OCA domain; it reads PKVYQGVRVKITVKELLQQRRAH. The segment at 24–45 is disordered; sequence RRAHQAASGGTRSGGSSVHLSD. Over residues 31–40 the composition is skewed to low complexity; it reads SGGTRSGGSS.

The protein belongs to the POU2AF family. Interacts with POU2F3 in a DNA-dependent manner; this interaction increases POU2F3 transactivation activity. Expressed in many cell types of epithelial, mesenchymal and hematopoietic origins. Expressed in tufs cells.

It is found in the cytoplasm. The protein resides in the nucleus. Transcriptional coactivator that specifically associates with POU2F3. This complex drives the development of tuft cells, a rare a rare chemosensory cells that coordinate immune and neural functions within mucosal epithelial tissues. The protein is POU class 2 homeobox associating factor 3 of Homo sapiens (Human).